The sequence spans 484 residues: UBX domain-containing protein 11 (484 aa).

Residues 1–28 form a disordered region; that stretch reads MSSPLASLSKTRKVPLESESVNPGRRGI. A coiled-coil region spans residues 69-147; the sequence is HDSELMASMT…IGEMERFLSD (79 aa). One can recognise an SEP domain in the interval 227-291; it reads LEPIPLKVYR…VSDLRNQIYP (65 aa). Residues 389–466 form the UBX domain; it reads PMPLLSMLRI…GLVPNATLLL (78 aa). A phosphoserine mark is found at Ser478 and Ser482.

Interacts with GNA12, GNA13, RND1, RND2 and RND3.

It localises to the cytoplasm. The protein localises to the cytoskeleton. In terms of biological role, may be involved in the reorganization of actin cytoskeleton mediated by RND1, RND2 and RND3. Promotes RHOA activation mediated by GNA12 and GNA13. The protein is UBX domain-containing protein 11 (Ubxn11) of Mus musculus (Mouse).